Consider the following 83-residue polypeptide: Cytochrome b559 subunit alpha (83 aa).

Residues 21–35 (VIHSITIPSLFIAGW) traverse the membrane as a helical segment. Heme is bound at residue histidine 23.

The protein belongs to the PsbE/PsbF family. In terms of assembly, heterodimer of an alpha subunit and a beta subunit. PSII is composed of 1 copy each of membrane proteins PsbA, PsbB, PsbC, PsbD, PsbE, PsbF, PsbH, PsbI, PsbJ, PsbK, PsbL, PsbM, PsbT, PsbX, PsbY, PsbZ, Psb30/Ycf12, at least 3 peripheral proteins of the oxygen-evolving complex and a large number of cofactors. It forms dimeric complexes. It depends on heme b as a cofactor.

It is found in the plastid. Its subcellular location is the chloroplast thylakoid membrane. Functionally, this b-type cytochrome is tightly associated with the reaction center of photosystem II (PSII). PSII is a light-driven water:plastoquinone oxidoreductase that uses light energy to abstract electrons from H(2)O, generating O(2) and a proton gradient subsequently used for ATP formation. It consists of a core antenna complex that captures photons, and an electron transfer chain that converts photonic excitation into a charge separation. In Panax ginseng (Korean ginseng), this protein is Cytochrome b559 subunit alpha.